Consider the following 294-residue polypeptide: Eukaryotic translation initiation factor 3 subunit G (294 aa).

Disordered stretches follow at residues methionine 1–isoleucine 43 and glutamate 160–threonine 211. Residues glycine 194–threonine 211 are compositionally biased toward basic and acidic residues. The region spanning alanine 212–proline 290 is the RRM domain.

This sequence belongs to the eIF-3 subunit G family. In terms of assembly, component of the eukaryotic translation initiation factor 3 (eIF-3) complex.

It is found in the cytoplasm. RNA-binding component of the eukaryotic translation initiation factor 3 (eIF-3) complex, which is involved in protein synthesis of a specialized repertoire of mRNAs and, together with other initiation factors, stimulates binding of mRNA and methionyl-tRNAi to the 40S ribosome. The eIF-3 complex specifically targets and initiates translation of a subset of mRNAs involved in cell proliferation. This subunit can bind 18S rRNA. The protein is Eukaryotic translation initiation factor 3 subunit G of Nematostella vectensis (Starlet sea anemone).